The following is a 296-amino-acid chain: Aspartate and glycine-rich protein (296 aa).

A compositionally biased stretch (gly residues) spans 1-77 (GDGENGNGNG…GNGNGNGNGN (77 aa)). Disordered stretches follow at residues 1–219 (GDGE…DNGG) and 233–296 (RARA…YTSY). Composition is skewed to acidic residues over residues 80-96 (FDDDDWDDFDWDDDDWN) and 103-194 (NGDD…DDRW). A compositionally biased stretch (gly residues) spans 198–210 (NGNGNGNGNGNGN). The segment covering 233–243 (RARAAASAAGR) has biased composition (low complexity). Residues 244 to 259 (SRGGSGGSGGSGGSGG) are compositionally biased toward gly residues. Over residues 270-281 (RAFASARASSGN) the composition is skewed to low complexity.

In terms of tissue distribution, component of the acid-soluble and acid-insoluble organic matrix of calcified shell layers (at protein level).

The protein localises to the secreted. The chain is Aspartate and glycine-rich protein from Haliotis asinina (Donkey's ear abalone).